Reading from the N-terminus, the 245-residue chain is tRNA (guanine-N(1)-)-methyltransferase (245 aa).

S-adenosyl-L-methionine contacts are provided by residues Gly112 and 132–137; that span reads IGDFVL.

This sequence belongs to the RNA methyltransferase TrmD family. As to quaternary structure, homodimer.

It localises to the cytoplasm. It carries out the reaction guanosine(37) in tRNA + S-adenosyl-L-methionine = N(1)-methylguanosine(37) in tRNA + S-adenosyl-L-homocysteine + H(+). Functionally, specifically methylates guanosine-37 in various tRNAs. The polypeptide is tRNA (guanine-N(1)-)-methyltransferase (Geobacter metallireducens (strain ATCC 53774 / DSM 7210 / GS-15)).